Reading from the N-terminus, the 987-residue chain is MSHIRVAFAPLDTNPSTCGLETFATQIETLSQMMTAEEMKAELYDCVRRILREQKFDQIRENEAMLRLYKVMGRSSTNLKGRGIYEQLFKKDHFTGSLKFYLQWAEECGKDQMLEEFKDVLKLARDRLSERIEMTAIESGFRDLVDEYFNGESGDMFTRPDETMDLFRFNAGSKKKRRSSVCFLQHNVPINNSGKAAFGPKTKTDLRQACIDRPNYHGISIEEFRFAKWKDTFGEDVDDDYRKRKDSGVVFVKHQVIDTDRQAREEVENRFNANLNPRRRHLSPVSEKTVDDEEEKRSRIYSPLVATKDAHRPALRSKIENPPATVTLSSDTKSASEKDVSDSDDADDDERLKIMTAGRKDGNPPDRSTSISSNYSTASARTSKSGAGLDLMAENKCLEAHAMFSDTVHLASEKTMVLGDDSVFVPERSLATTQIVTDFSVLCDPDPTMTITQERPKKVSNGLNVVYDEAAEPEESQKVEESEVQPEIVLVSPVTQTSPATMFNDIYDDEIEFGFFKPSRGNFVTSTPAQGVHLVNIDEYFGNKEEESTHEQEAPVFVAPTSSTFSKLTRRKSLAANQAVQPSVTESSKPERSDPKDSSIDCLTANLGRRLSIGADEIPNLTENNESEITGCKIRRRSEIIKQGDINPWDETLRKKLMCLVRPPQNMHEFQERAPKIQALRDCEVSGEKLHIQTLIGQGGYAKVYRAVTDDQRTVAVKYEVPSCSWEVYICDQMRNRLKDRGLELMAKCCIMEVMDAYVYSTASLLVNQYHEYGTLLEYANNMKDPNWHITCFLITQMARVVKEVHASKIIHGDIKPDNFMITRKIDDKWGKDALMSNDSFVIKIIDWGRAIDMMPLKNQRFKGRAGTEAFDCPEMVDGRSWTYQADYFGFAATMAVVVAGKYAQLTGASVGDYSLNVDIKRRNILRDACYDVINRFLNIPSCDSLPDWNILIKSFSEIWNEKFEASGWRQAVSKFNEACDLAANQK.

Disordered stretches follow at residues 278–385 and 574–599; these read RRRH…TSKS and LAANQAVQPSVTESSKPERSDPKDSS. A compositionally biased stretch (basic and acidic residues) spans 350–364; that stretch reads ERLKIMTAGRKDGNP. Low complexity predominate over residues 368–380; sequence STSISSNYSTASA. Residues 575–587 are compositionally biased toward polar residues; the sequence is AANQAVQPSVTES. The span at 588-599 shows a compositional bias: basic and acidic residues; the sequence is SKPERSDPKDSS. The Protein kinase domain occupies 690–987; that stretch reads LHIQTLIGQG…EACDLAANQK (298 aa). ATP is bound by residues 696-704 and Lys718; that span reads IGQGGYAKV. Asp814 acts as the Proton acceptor in catalysis.

It belongs to the protein kinase superfamily. Ser/Thr protein kinase family. BUB1 subfamily. Interacts (via kinase domain) with mdf-1 (via coiled coil domain); the interaction recruits mdf-1 to unattached kinetochores during mitosis and between homologous chromosomes in early anaphase of meiosis I. May interact with bub-3; for localization at the kinetochore and the onset of anaphase.

It is found in the cytoplasm. The protein resides in the cell cortex. The protein localises to the nucleus. Its subcellular location is the chromosome. It localises to the centromere. It is found in the kinetochore. The enzyme catalyses L-seryl-[protein] + ATP = O-phospho-L-seryl-[protein] + ADP + H(+). The catalysed reaction is L-threonyl-[protein] + ATP = O-phospho-L-threonyl-[protein] + ADP + H(+). In terms of biological role, serine/threonine-protein kinase essential for spindle-assembly checkpoint signaling. Plays a key role in the recruitment of the checkpoint proteins bub-3, mdf-1 and mdf-2 to unattached kinetochores. mdf-1 recruitment is independent of bub-1 kinase activity. Has a role in the correct kinetochore localization of the spindly-like protein spdl-1. In addition, during meiotic anaphase I, controls the recruitment of hcp-1/2 and klp-19 to the ring-shaped domain formed between chromosomes. Involved in chromosome alignment, chromosome homolog segregation and spindle assembly. In association with bub-3 at the kinetochore region of chromosomes, promotes the onset on anaphase independently from spindle checkpoint signaling and promotes the formation of stable end-on bipolar attachments of chromosomes. Plays a role in nuclear envelope breakdown. Required maternally during embryogenesis and in the zygote for the postembryonic development of several tissues including ventral cord neurons, gonad, intestine and seam cells. The protein is Mitotic checkpoint serine/threonine-protein kinase bub-1 of Caenorhabditis elegans.